The following is a 298-amino-acid chain: MDKMALIKELRERTAAGMSDCKKALEVSNWDVEEAISFLKKNGKIKAASKANRISADGLLVEAGNNERAVLVELNCETDFVAHGEEFVALANTVAQTIVANFELVKENGAEAALALKLANSEEILADAISSYSAKCGEKIELRRFVLIDAGTNQSVSTFVHINGKIGAIMLTEGSDAEAARNVAMHLSAMNPEYIFAEDIPGSVLEKFASEFKEPAGFSDKPEKIQETIRKGFVDKKISEVTLLSQKLIMDESKTVQQYLKELKLRLIKAIRFGLGEGIEKKETDFAAEVAEQMSKSM.

The tract at residues 78–81 (TDFV) is involved in Mg(2+) ion dislocation from EF-Tu.

The protein belongs to the EF-Ts family.

The protein localises to the cytoplasm. Associates with the EF-Tu.GDP complex and induces the exchange of GDP to GTP. It remains bound to the aminoacyl-tRNA.EF-Tu.GTP complex up to the GTP hydrolysis stage on the ribosome. This Mycoplasmopsis agalactiae (strain NCTC 10123 / CIP 59.7 / PG2) (Mycoplasma agalactiae) protein is Elongation factor Ts.